A 200-amino-acid chain; its full sequence is Holliday junction resolvase RecU (200 aa).

The disordered stretch occupies residues 1–25; the sequence is MTIRYPNGKRYNQASQPQKTPIKTH. Residues 10-25 are compositionally biased toward polar residues; the sequence is RYNQASQPQKTPIKTH. The Mg(2+) site is built by Thr-85, Asp-87, Glu-100, and Gln-119.

Belongs to the RecU family. Mg(2+) is required as a cofactor.

It is found in the cytoplasm. The catalysed reaction is Endonucleolytic cleavage at a junction such as a reciprocal single-stranded crossover between two homologous DNA duplexes (Holliday junction).. In terms of biological role, endonuclease that resolves Holliday junction intermediates in genetic recombination. Cleaves mobile four-strand junctions by introducing symmetrical nicks in paired strands. Promotes annealing of linear ssDNA with homologous dsDNA. Required for DNA repair, homologous recombination and chromosome segregation. The protein is Holliday junction resolvase RecU of Bacillus cereus (strain G9842).